A 207-amino-acid polypeptide reads, in one-letter code: CASP-like protein 1D1 (207 aa).

The Cytoplasmic portion of the chain corresponds to M1–N40. Residues L41–A61 traverse the membrane as a helical segment. Residues K62–P89 are Extracellular-facing. Residues A90–I110 form a helical membrane-spanning segment. The Cytoplasmic segment spans residues S111–K124. A helical transmembrane segment spans residues T125–G145. At T146 to H176 the chain is on the extracellular side. The chain crosses the membrane as a helical span at residues I177–L197. Topologically, residues N198 to R207 are cytoplasmic.

It belongs to the Casparian strip membrane proteins (CASP) family. Homodimer and heterodimers.

The protein resides in the cell membrane. This is CASP-like protein 1D1 from Oryza sativa subsp. japonica (Rice).